A 172-amino-acid chain; its full sequence is Large ribosomal subunit protein uL10 (172 aa).

It belongs to the universal ribosomal protein uL10 family. As to quaternary structure, part of the ribosomal stalk of the 50S ribosomal subunit. The N-terminus interacts with L11 and the large rRNA to form the base of the stalk. The C-terminus forms an elongated spine to which L12 dimers bind in a sequential fashion forming a multimeric L10(L12)X complex.

In terms of biological role, forms part of the ribosomal stalk, playing a central role in the interaction of the ribosome with GTP-bound translation factors. This is Large ribosomal subunit protein uL10 from Pelodictyon phaeoclathratiforme (strain DSM 5477 / BU-1).